A 620-amino-acid chain; its full sequence is Sodium-dependent dopamine transporter (620 aa).

The Cytoplasmic portion of the chain corresponds to 1 to 56 (MSKSKCSVGLMSSVVAPAKEPNAVGPKEVELILVKEQNGVQLTSSTLTNPRQSPVE). A discontinuously helical transmembrane segment spans residues 57-95 (AQDRETWGKKIDFLLSVIGFAVDLANVWRFPYLCYKNGG). Gly75, Ala77, Val78, Asp79, and Asn82 together coordinate Na(+). Residue Asp79 participates in dopamine binding. The next 2 helical transmembrane spans lie at 96–127 (GAFL…NREG) and 128–171 (AAGV…FSSF). Dopamine is bound by residues Ser149 and Gly153. The Extracellular segment spans residues 172–236 (TTELPWIHCN…SHGIDDLGPP (65 aa)). An intrachain disulfide couples Cys180 to Cys189. N-linked (GlcNAc...) asparagine glycans are attached at residues Asn181, Asn188, and Asn205. 2 helical membrane-spanning segments follow: residues 237-256 (RWQL…FSLW) and 257-287 (KGVK…GVTL). Residues 288–306 (PGAIDGIRAYLSVDFYRLC) lie on the Extracellular side of the membrane. The discontinuously helical transmembrane segment at 307–335 (EASVWIDAATQVCFSLGVGFGVLIAFSSY) threads the bilayer. Gln317 contacts chloride. Phe320 is a binding site for dopamine. 2 residues coordinate Na(+): Ser321 and Asn353. Residue Ser321 coordinates chloride. The helical transmembrane segment at 336–376 (NKFTNNCYRDAIVTTSINSLTSFSSGFVVFSFLGYMAQKHS) threads the bilayer. A chloride-binding site is contributed by Ser357. Over 377–400 (VPIGDVAKDGPGLIFIIYPEAIAT) the chain is Extracellular. A run of 3 helical transmembrane segments spans residues 401 to 442 (LPLS…QLLH), 443 to 466 (RHRE…CVTN), and 467 to 499 (GGIY…AWFY). Residues Leu418, Asp421, and Ser422 each coordinate Na(+). Dopamine-binding residues include Ser422 and Ala423. At 500-516 (GVGQFSDDIQQMTGQRP) the chain is on the cytoplasmic side. The helical transmembrane segment at 517–542 (SLYWRLCWKLVSPCFLLFVVVVSIVT) threads the bilayer. Topologically, residues 543-553 (FRPPHYGAYIF) are extracellular. The helical transmembrane segment at 554 to 583 (PDWANALGWVIATSSMAMVPIYAAYKFCSL) threads the bilayer. Positions 561–590 (GWVIATSSMAMVPIYAAYKFCSLPGSFREK) are interaction with TGFB1I1. The Cytoplasmic segment spans residues 584-620 (PGSFREKLAYAIAPEKDRELVDRGEVRQFTLRHWLKV).

The protein belongs to the sodium:neurotransmitter symporter (SNF) (TC 2.A.22) family. SLC6A3 subfamily. As to quaternary structure, monomer. Homooligomer; disulfide-linked. Interacts with PRKCABP and TGFB1I1. Interacts (via N-terminus) with SYNGR3 (via N-terminus). Interacts with SLC18A2. Interacts with TOR1A (ATP-bound); TOR1A regulates SLC6A3 subcellular location. Interacts with alpha-synuclein/SNCA. Interacts with SEPTIN4. In terms of tissue distribution, highly expressed in substantia nigra. Expressed in axonal varicosities in dopaminergic nerve terminals (at protein level). Expressed in the striatum (at protein level).

Its subcellular location is the cell membrane. The protein localises to the cell projection. It localises to the neuron projection. It is found in the axon. The catalysed reaction is dopamine(out) + chloride(out) + Na(+)(out) = dopamine(in) + chloride(in) + Na(+)(in). The enzyme catalyses dopamine(out) + chloride(out) + 2 Na(+)(out) = dopamine(in) + chloride(in) + 2 Na(+)(in). It carries out the reaction (R)-noradrenaline(out) + chloride(out) + Na(+)(out) = (R)-noradrenaline(in) + chloride(in) + Na(+)(in). Inhibited by cocaine, which occupies the same binding site as dopamine. Inhibited by zinc ions. Enhanced by the antibiotic valinomycin. Inhibited by benztropine. Inhibited by GBR 12909 dihydrochloride and amphetamine. Inhibited by mazindol, GBR 12783 dihydrochloride, nomifensine, diclofensine, amfonelic acid, Lu 19005, Win-35428, bupropion and ritalin. Its function is as follows. Mediates sodium- and chloride-dependent transport of dopamine. Also mediates sodium- and chloride-dependent transport of norepinephrine (also known as noradrenaline). Regulator of light-dependent retinal hyaloid vessel regression, downstream of OPN5 signaling. The chain is Sodium-dependent dopamine transporter (SLC6A3) from Homo sapiens (Human).